Here is a 175-residue protein sequence, read N- to C-terminus: Methylated-DNA--protein-cysteine methyltransferase (175 aa).

Residue C142 is the Nucleophile; methyl group acceptor of the active site.

The protein belongs to the MGMT family.

The protein localises to the cytoplasm. The enzyme catalyses a 6-O-methyl-2'-deoxyguanosine in DNA + L-cysteinyl-[protein] = S-methyl-L-cysteinyl-[protein] + a 2'-deoxyguanosine in DNA. The catalysed reaction is a 4-O-methyl-thymidine in DNA + L-cysteinyl-[protein] = a thymidine in DNA + S-methyl-L-cysteinyl-[protein]. Functionally, involved in the cellular defense against the biological effects of O6-methylguanine (O6-MeG) and O4-methylthymine (O4-MeT) in DNA. Repairs the methylated nucleobase in DNA by stoichiometrically transferring the methyl group to a cysteine residue in the enzyme. This is a suicide reaction: the enzyme is irreversibly inactivated. The sequence is that of Methylated-DNA--protein-cysteine methyltransferase from Thermococcus sibiricus (strain DSM 12597 / MM 739).